The following is a 330-amino-acid chain: ADP-L-glycero-D-manno-heptose-6-epimerase (330 aa).

Residues phenylalanine 10–isoleucine 11, aspartate 31–aspartate 32, lysine 38, lysine 53, glutamine 74–serine 78, and asparagine 91 contribute to the NADP(+) site. Tyrosine 138 serves as the catalytic Proton acceptor. NADP(+) is bound at residue lysine 142. Asparagine 167 is a substrate binding site. Valine 168 and lysine 176 together coordinate NADP(+). Residue lysine 176 is the Proton acceptor of the active site. Residues arginine 178, histidine 185, phenylalanine 199–tryptophan 202, arginine 212, and tyrosine 291 each bind substrate.

The protein belongs to the NAD(P)-dependent epimerase/dehydratase family. HldD subfamily. Homopentamer. It depends on NADP(+) as a cofactor.

It carries out the reaction ADP-D-glycero-beta-D-manno-heptose = ADP-L-glycero-beta-D-manno-heptose. The protein operates within nucleotide-sugar biosynthesis; ADP-L-glycero-beta-D-manno-heptose biosynthesis; ADP-L-glycero-beta-D-manno-heptose from D-glycero-beta-D-manno-heptose 7-phosphate: step 4/4. Functionally, catalyzes the interconversion between ADP-D-glycero-beta-D-manno-heptose and ADP-L-glycero-beta-D-manno-heptose via an epimerization at carbon 6 of the heptose. This is ADP-L-glycero-D-manno-heptose-6-epimerase from Bordetella petrii (strain ATCC BAA-461 / DSM 12804 / CCUG 43448).